The sequence spans 267 residues: 4-hydroxy-tetrahydrodipicolinate reductase (267 aa).

NAD(+) contacts are provided by residues 8–13 and D34; that span reads GAAGRM. R35 is a binding site for NADP(+). Residues 98-100 and 122-125 contribute to the NAD(+) site; these read GTT and AANF. The active-site Proton donor/acceptor is the H155. H156 contacts (S)-2,3,4,5-tetrahydrodipicolinate. K159 acts as the Proton donor in catalysis. (S)-2,3,4,5-tetrahydrodipicolinate is bound at residue 165 to 166; that stretch reads GT.

It belongs to the DapB family.

It localises to the cytoplasm. It catalyses the reaction (S)-2,3,4,5-tetrahydrodipicolinate + NAD(+) + H2O = (2S,4S)-4-hydroxy-2,3,4,5-tetrahydrodipicolinate + NADH + H(+). The catalysed reaction is (S)-2,3,4,5-tetrahydrodipicolinate + NADP(+) + H2O = (2S,4S)-4-hydroxy-2,3,4,5-tetrahydrodipicolinate + NADPH + H(+). The protein operates within amino-acid biosynthesis; L-lysine biosynthesis via DAP pathway; (S)-tetrahydrodipicolinate from L-aspartate: step 4/4. Its function is as follows. Catalyzes the conversion of 4-hydroxy-tetrahydrodipicolinate (HTPA) to tetrahydrodipicolinate. This is 4-hydroxy-tetrahydrodipicolinate reductase from Pseudomonas putida (strain W619).